The sequence spans 71 residues: Protein CYSTEINE-RICH TRANSMEMBRANE MODULE 6 (71 aa).

Polar residues predominate over residues 1-12 (MSQYSQNQSSGA). The interval 1 to 36 (MSQYSQNQSSGAYPTPPVSTGPYVAPPPLGYPTNDT) is disordered. The span at 14–30 (PTPPVSTGPYVAPPPLG) shows a compositional bias: pro residues. A helical transmembrane segment spans residues 48 to 64 (SKGDGFLKGCLAAMCCC).

This sequence belongs to the CYSTM1 family. Homodimer and heterodimers. Interacts with CYSTM7 and WIH1/CYSTM13. Mostly expressed in roots, stems, rosette leaves and siliques and, to a lower extent, in flowers and cauline leaves.

The protein resides in the cell membrane. It is found in the cytoplasm. In terms of biological role, involved in resistance to abiotic stress. The protein is Protein CYSTEINE-RICH TRANSMEMBRANE MODULE 6 of Arabidopsis thaliana (Mouse-ear cress).